Reading from the N-terminus, the 216-residue chain is Imidazole glycerol phosphate synthase subunit HisH (216 aa).

The Glutamine amidotransferase type-1 domain occupies 2-216 (RVAIIDYGSG…LISNFLRWKP (215 aa)). The active-site Nucleophile is the Cys-88. Catalysis depends on residues His-196 and Glu-198.

In terms of assembly, heterodimer of HisH and HisF.

The protein resides in the cytoplasm. It carries out the reaction 5-[(5-phospho-1-deoxy-D-ribulos-1-ylimino)methylamino]-1-(5-phospho-beta-D-ribosyl)imidazole-4-carboxamide + L-glutamine = D-erythro-1-(imidazol-4-yl)glycerol 3-phosphate + 5-amino-1-(5-phospho-beta-D-ribosyl)imidazole-4-carboxamide + L-glutamate + H(+). The catalysed reaction is L-glutamine + H2O = L-glutamate + NH4(+). It functions in the pathway amino-acid biosynthesis; L-histidine biosynthesis; L-histidine from 5-phospho-alpha-D-ribose 1-diphosphate: step 5/9. Its function is as follows. IGPS catalyzes the conversion of PRFAR and glutamine to IGP, AICAR and glutamate. The HisH subunit catalyzes the hydrolysis of glutamine to glutamate and ammonia as part of the synthesis of IGP and AICAR. The resulting ammonia molecule is channeled to the active site of HisF. The protein is Imidazole glycerol phosphate synthase subunit HisH of Agrobacterium fabrum (strain C58 / ATCC 33970) (Agrobacterium tumefaciens (strain C58)).